We begin with the raw amino-acid sequence, 657 residues long: Interferon-induced GTP-binding protein Mx1 (657 aa).

Met1 carries the post-translational modification N-acetylmethionine. In terms of domain architecture, Dynamin-type G spans 63–336 (DLALPAIAVI…LITHICKTLP (274 aa)). The interval 73–80 (GDQSSGKS) is G1 motif. Residue 73-80 (GDQSSGKS) participates in GTP binding. Positions 98–100 (VTR) are G2 motif. Residues 174–177 (DLPG) form a G3 motif region. GTP-binding positions include 174-178 (DLPGI) and 243-246 (TKPD). Residues 243–246 (TKPD) form a G4 motif region. The tract at residues 275–278 (KCRG) is G5 motif. The interval 337–362 (LLENQIKENHEKITEELQKYGSDVPE) is bundle signaling element (BSE). The middle domain stretch occupies residues 362–529 (EDEHEKMFFL…HFQMEQIVYC (168 aa)). The stalk stretch occupies residues 363–627 (DEHEKMFFLI…KDTYSWLLKE (265 aa)). Residues 540-551 (RVREKDSDEEKK) are compositionally biased toward basic and acidic residues. A disordered region spans residues 540–559 (RVREKDSDEEKKKKTSSMSH). Residues 550-553 (KKKK) form a critical for lipid-binding region. The GED domain maps to 569-657 (LSEILEHLLA…ARRRLAKFPG (89 aa)).

The protein belongs to the TRAFAC class dynamin-like GTPase superfamily. Dynamin/Fzo/YdjA family. Homooligomer. Oligomerizes into multimeric filamentous or ring-like structures by virtue of its stalk domain. Oligomerization is critical for GTPase activity, protein stability, and recognition of viral target structures. Interacts with TRPC1, TRPC3, TRPC4, TRPC5, TRPC6 and TRPC7. Interacts with HSPA5. Interacts with TUBB/TUBB5. Interacts with DDX39A and DDX39B. ISGylated.

Its subcellular location is the cytoplasm. The protein resides in the endoplasmic reticulum membrane. The protein localises to the perinuclear region. Functionally, interferon-induced dynamin-like GTPase with antiviral activity. In Canis lupus familiaris (Dog), this protein is Interferon-induced GTP-binding protein Mx1 (MX1).